A 311-amino-acid chain; its full sequence is uncharacterized protein (311 aa).

This is an uncharacterized protein from Mycoplasma genitalium (strain ATCC 33530 / DSM 19775 / NCTC 10195 / G37) (Mycoplasmoides genitalium).